The primary structure comprises 119 residues: Large ribosomal subunit protein uL18 (119 aa).

It belongs to the universal ribosomal protein uL18 family. In terms of assembly, part of the 50S ribosomal subunit; part of the 5S rRNA/L5/L18/L25 subcomplex. Contacts the 5S and 23S rRNAs.

Its function is as follows. This is one of the proteins that bind and probably mediate the attachment of the 5S RNA into the large ribosomal subunit, where it forms part of the central protuberance. The chain is Large ribosomal subunit protein uL18 from Xylella fastidiosa (strain M23).